We begin with the raw amino-acid sequence, 550 residues long: Hydroxylamine reductase (550 aa).

Cys3, Cys6, Cys18, and Cys25 together coordinate [2Fe-2S] cluster. Hybrid [4Fe-2O-2S] cluster-binding residues include His249, Glu273, Cys317, Cys405, Cys433, Cys458, Glu492, and Lys494. Cys405 is subject to Cysteine persulfide.

The protein belongs to the HCP family. [2Fe-2S] cluster serves as cofactor. Requires hybrid [4Fe-2O-2S] cluster as cofactor.

It is found in the cytoplasm. It carries out the reaction A + NH4(+) + H2O = hydroxylamine + AH2 + H(+). In terms of biological role, catalyzes the reduction of hydroxylamine to form NH(3) and H(2)O. The polypeptide is Hydroxylamine reductase (Escherichia coli O7:K1 (strain IAI39 / ExPEC)).